Reading from the N-terminus, the 492-residue chain is Ribose import ATP-binding protein RbsA (492 aa).

2 ABC transporter domains span residues 3–239 (IEMK…VGRS) and 249–492 (AEIR…TGGQ). 35 to 42 (GENGAGKS) is a binding site for ATP.

The protein belongs to the ABC transporter superfamily. Ribose importer (TC 3.A.1.2.1) family. The complex is composed of an ATP-binding protein (RbsA), two transmembrane proteins (RbsC) and a solute-binding protein (RbsB).

It localises to the cell membrane. The catalysed reaction is D-ribose(out) + ATP + H2O = D-ribose(in) + ADP + phosphate + H(+). Its function is as follows. Part of the ABC transporter complex RbsABC involved in ribose import. Responsible for energy coupling to the transport system. The protein is Ribose import ATP-binding protein RbsA of Lactococcus lactis subsp. lactis (strain IL1403) (Streptococcus lactis).